Consider the following 247-residue polypeptide: Serine protease 1 (247 aa).

A signal peptide spans 1–15 (MNPLLILTFVAAALA). Residues 16 to 23 (APFDDDDK) constitute a propeptide, activation peptide. In terms of domain architecture, Peptidase S1 spans 24–244 (IVGGYNCEEN…YVKWIKNTIA (221 aa)). 5 disulfides stabilise this stretch: Cys-30-Cys-160, Cys-48-Cys-64, Cys-139-Cys-206, Cys-171-Cys-185, and Cys-196-Cys-220. The Charge relay system role is filled by His-63. Ca(2+) is bound by residues Glu-75, Asn-77, Val-80, and Glu-85. Asp-107 acts as the Charge relay system in catalysis. The residue at position 154 (Tyr-154) is a Sulfotyrosine. Ser-200 acts as the Charge relay system in catalysis.

Belongs to the peptidase S1 family. Interacts with SERPINA1. Ca(2+) serves as cofactor. Occurs in a single-chain form and a two-chain form, produced by proteolytic cleavage after Arg-122. In terms of processing, sulfation at Tyr-154 increases selectivity towards basic versus apolar residues at the P2' position of inhibitors that bind in a substrate-like fashion. Although the increase in selectivity is relatively small, it may facilitate digestion of a broader range of dietary proteins.

It is found in the secreted. The protein resides in the extracellular space. It carries out the reaction Preferential cleavage: Arg-|-Xaa, Lys-|-Xaa.. In terms of biological role, has activity against the synthetic substrates Boc-Phe-Ser-Arg-Mec, Boc-Leu-Thr-Arg-Mec, Boc-Gln-Ala-Arg-Mec and Boc-Val-Pro-Arg-Mec. The single-chain form is more active than the two-chain form against all of these substrates. The sequence is that of Serine protease 1 from Homo sapiens (Human).